Here is an 86-residue protein sequence, read N- to C-terminus: MTFKLFVVVTLVLAIYVATAEEAMKDDSEPAERGCIKYGDRCGSPHGLPSNCCNDWKYKGRCGCTMGVCTCGPNCPSRGCDWSKKG.

The signal sequence occupies residues 1–20 (MTFKLFVVVTLVLAIYVATA). The propeptide occupies 21-33 (EEAMKDDSEPAER). 4 disulfides stabilise this stretch: cysteine 35-cysteine 53, cysteine 42-cysteine 62, cysteine 52-cysteine 71, and cysteine 64-cysteine 69.

The protein belongs to the neurotoxin 39 family. In terms of tissue distribution, expressed by the venom gland.

It is found in the secreted. Functionally, toxin active against S.frugiperda larvae. May act on sodium channels (Nav). The chain is U2-sicaritoxin-Li1a from Loxosceles intermedia (Brown spider).